Reading from the N-terminus, the 210-residue chain is ATP-dependent Clp protease proteolytic subunit (210 aa).

S114 acts as the Nucleophile in catalysis. H139 is an active-site residue.

The protein belongs to the peptidase S14 family. Fourteen ClpP subunits assemble into 2 heptameric rings which stack back to back to give a disk-like structure with a central cavity, resembling the structure of eukaryotic proteasomes.

The protein localises to the cytoplasm. It carries out the reaction Hydrolysis of proteins to small peptides in the presence of ATP and magnesium. alpha-casein is the usual test substrate. In the absence of ATP, only oligopeptides shorter than five residues are hydrolyzed (such as succinyl-Leu-Tyr-|-NHMec, and Leu-Tyr-Leu-|-Tyr-Trp, in which cleavage of the -Tyr-|-Leu- and -Tyr-|-Trp bonds also occurs).. Its function is as follows. Cleaves peptides in various proteins in a process that requires ATP hydrolysis. Has a chymotrypsin-like activity. Plays a major role in the degradation of misfolded proteins. In Janthinobacterium sp. (strain Marseille) (Minibacterium massiliensis), this protein is ATP-dependent Clp protease proteolytic subunit.